Reading from the N-terminus, the 353-residue chain is Cytochrome bc1 complex Rieske iron-sulfur subunit (353 aa).

The disordered stretch occupies residues 1–51 (MSSQDIPEENLPAEQDRPHGAAARPADETNPFADPGLPPHEPRVQDVDERA). A compositionally biased stretch (basic and acidic residues) spans 40–51 (HEPRVQDVDERA). Transmembrane regions (helical) follow at residues 60–80 (ALLF…FVAI), 99–119 (FALG…AVHW), and 164–184 (LIRN…VVLL). The Rieske domain occupies 246 to 336 (KAALMIIRLE…IGVNDEGYLE (91 aa)). 4 residues coordinate [2Fe-2S] cluster: cysteine 279, histidine 281, cysteine 298, and histidine 301. The cysteines at positions 284 and 300 are disulfide-linked.

The protein belongs to the Rieske iron-sulfur protein family. The cytochrome bc1 complex is composed of a cytochrome b (QcrB), the Rieske iron-sulfur protein (QcrA) and a diheme cytochrome c (QcrC) subunit. The cofactor is [2Fe-2S] cluster.

It localises to the cell membrane. Iron-sulfur subunit of the cytochrome bc1 complex, an essential component of the respiratory electron transport chain required for ATP synthesis. The bc1 complex catalyzes the oxidation of menaquinol and the reduction of cytochrome c in the respiratory chain. The bc1 complex operates through a Q-cycle mechanism that couples electron transfer to generation of the proton gradient that drives ATP synthesis. This Streptomyces coelicolor (strain ATCC BAA-471 / A3(2) / M145) protein is Cytochrome bc1 complex Rieske iron-sulfur subunit (qcrA).